Consider the following 304-residue polypeptide: Sulfate adenylyltransferase subunit 2 (304 aa).

The protein belongs to the PAPS reductase family. CysD subfamily. In terms of assembly, heterodimer composed of CysD, the smaller subunit, and CysNC.

The enzyme catalyses sulfate + ATP + H(+) = adenosine 5'-phosphosulfate + diphosphate. The protein operates within sulfur metabolism; hydrogen sulfide biosynthesis; sulfite from sulfate: step 1/3. With CysN forms the ATP sulfurylase (ATPS) that catalyzes the adenylation of sulfate producing adenosine 5'-phosphosulfate (APS) and diphosphate, the first enzymatic step in sulfur assimilation pathway. APS synthesis involves the formation of a high-energy phosphoric-sulfuric acid anhydride bond driven by GTP hydrolysis by CysN coupled to ATP hydrolysis by CysD. The protein is Sulfate adenylyltransferase subunit 2 of Xylella fastidiosa (strain Temecula1 / ATCC 700964).